Here is a 77-residue protein sequence, read N- to C-terminus: Small ribosomal subunit protein bS16 (77 aa).

It belongs to the bacterial ribosomal protein bS16 family.

The sequence is that of Small ribosomal subunit protein bS16 from Helicobacter hepaticus (strain ATCC 51449 / 3B1).